We begin with the raw amino-acid sequence, 349 residues long: Transcription elongation factor A protein 3 (349 aa).

The region spanning 5-82 (EELLRIAKKL…RNWKQLLDSP (78 aa)) is the TFIIS N-terminal domain. Residues 80-170 (DSPATPKGEK…RTPSSPSSPT (91 aa)) are disordered. A compositionally biased stretch (basic and acidic residues) spans 101 to 110 (KGLDCSDWKP). Residue Ser-115 is modified to Phosphoserine. Residues 121 to 133 (RVEEPKDRRDSVD) show a composition bias toward basic and acidic residues. Low complexity-rich tracts occupy residues 134–144 (SKSSATSSPKR) and 160–170 (PRTPSSPSSPT). Ser-141 is subject to Phosphoserine. In terms of domain architecture, TFIIS central spans 188–304 (VRDKCVEMLS…EHQMAKTGGT (117 aa)). The TFIIS-type zinc finger occupies 307 to 347 (DLFQCSKCKKKNCTYNQVQTRSADEPMTTFVLCNECGNRWK). Cys-311, Cys-314, Cys-339, and Cys-342 together coordinate Zn(2+).

This sequence belongs to the TFS-II family.

It localises to the nucleus. In terms of biological role, necessary for efficient RNA polymerase II transcription elongation past template-encoded arresting sites. The arresting sites in DNA have the property of trapping a certain fraction of elongating RNA polymerases that pass through, resulting in locked ternary complexes. Cleavage of the nascent transcript by S-II allows the resumption of elongation from the new 3'-terminus. The sequence is that of Transcription elongation factor A protein 3 (TCEA3) from Bos taurus (Bovine).